The chain runs to 397 residues: 3-ketoacyl-CoA thiolase, mitochondrial (397 aa).

The N-terminal 16 residues, 1-16 (MALLRGVFIVAAKRTP), are a transit peptide targeting the mitochondrion; not cleaved. An N6-acetyllysine; alternate modification is found at Lys-25. At Lys-25 the chain carries N6-succinyllysine; alternate. At Ser-28 the chain carries Phosphoserine. Lys-45 bears the N6-succinyllysine mark. Cys-92 serves as the catalytic Acyl-thioester intermediate. Thr-119 is modified (phosphothreonine). Residue Ser-121 is modified to Phosphoserine. Tyr-127 is subject to Phosphotyrosine. Thr-136 carries the phosphothreonine modification. 6 positions are modified to N6-acetyllysine; alternate: Lys-137, Lys-143, Lys-158, Lys-171, Lys-191, and Lys-209. N6-succinyllysine; alternate occurs at positions 137, 143, 158, 171, 191, and 209. Lys-211, Lys-212, and Lys-214 each carry N6-succinyllysine. CoA-binding residues include Arg-224 and Thr-227. Lys-234 bears the N6-acetyllysine; alternate mark. Lys-234 is subject to N6-succinyllysine; alternate. Lys-240 carries the post-translational modification N6-succinyllysine. Residue Lys-241 is modified to N6-acetyllysine. A CoA-binding site is contributed by Ser-251. 2 positions are modified to N6-acetyllysine: Lys-269 and Lys-270. Lys-305 is subject to N6-acetyllysine; alternate. The residue at position 305 (Lys-305) is an N6-succinyllysine; alternate. A Phosphoserine modification is found at Ser-310. N6-acetyllysine; alternate is present on Lys-312. Lys-312 bears the N6-succinyllysine; alternate mark. Lys-340 carries the post-translational modification N6-acetyllysine. Phosphoserine is present on Ser-344. Lys-375 carries the N6-acetyllysine modification. Cys-382 acts as the Proton donor/acceptor in catalysis.

Belongs to the thiolase-like superfamily. Thiolase family. In terms of assembly, homotetramer. Interacts with BNIP3.

The protein localises to the mitochondrion. The catalysed reaction is an acyl-CoA + acetyl-CoA = a 3-oxoacyl-CoA + CoA. The enzyme catalyses 2 acetyl-CoA = acetoacetyl-CoA + CoA. It carries out the reaction acetyl-CoA + H2O = acetate + CoA + H(+). It catalyses the reaction propanoyl-CoA + H2O = propanoate + CoA + H(+). The catalysed reaction is butanoyl-CoA + H2O = butanoate + CoA + H(+). The enzyme catalyses hexanoyl-CoA + H2O = hexanoate + CoA + H(+). It carries out the reaction octanoyl-CoA + H2O = octanoate + CoA + H(+). It catalyses the reaction decanoyl-CoA + H2O = decanoate + CoA + H(+). The catalysed reaction is dodecanoyl-CoA + H2O = dodecanoate + CoA + H(+). The enzyme catalyses tetradecanoyl-CoA + H2O = tetradecanoate + CoA + H(+). It carries out the reaction hexadecanoyl-CoA + H2O = hexadecanoate + CoA + H(+). Its pathway is lipid metabolism; fatty acid beta-oxidation. In the production of energy from fats, this is one of the enzymes that catalyzes the last step of the mitochondrial beta-oxidation pathway, an aerobic process breaking down fatty acids into acetyl-CoA. Using free coenzyme A/CoA, catalyzes the thiolytic cleavage of medium- to long-chain unbranched 3-oxoacyl-CoAs into acetyl-CoA and a fatty acyl-CoA shortened by two carbon atoms. Also catalyzes the condensation of two acetyl-CoA molecules into acetoacetyl-CoA and could be involved in the production of ketone bodies. Also displays hydrolase activity on various fatty acyl-CoAs. Thereby, could be responsible for the production of acetate in a side reaction to beta-oxidation. Abolishes BNIP3-mediated apoptosis and mitochondrial damage. The protein is 3-ketoacyl-CoA thiolase, mitochondrial (Acaa2) of Mus musculus (Mouse).